The primary structure comprises 165 residues: Chorismate pyruvate-lyase (165 aa).

Methionine 35, arginine 77, leucine 115, and glutamate 156 together coordinate substrate.

This sequence belongs to the UbiC family. In terms of assembly, monomer.

It localises to the cytoplasm. It carries out the reaction chorismate = 4-hydroxybenzoate + pyruvate. It functions in the pathway cofactor biosynthesis; ubiquinone biosynthesis. Functionally, removes the pyruvyl group from chorismate, with concomitant aromatization of the ring, to provide 4-hydroxybenzoate (4HB) for the ubiquinone pathway. The sequence is that of Chorismate pyruvate-lyase from Shigella sonnei (strain Ss046).